We begin with the raw amino-acid sequence, 382 residues long: Heme A synthase (382 aa).

A run of 7 helical transmembrane segments spans residues 37–57 (IRVW…VGGL), 126–146 (VIGV…QVPA), 152–172 (LLFL…MVAS), 188–208 (LATH…YIME), 231–251 (STGL…VAGI), 288–308 (LVQF…VVVW), and 332–352 (LQIV…IAIF). Residue His293 coordinates heme. His353 contacts heme. The chain crosses the membrane as a helical span at residues 356–376 (LAVIVWVLILRARFLSGYPIA).

It belongs to the COX15/CtaA family. Type 2 subfamily. As to quaternary structure, interacts with CtaB. Requires heme b as cofactor.

It localises to the cell membrane. The enzyme catalyses Fe(II)-heme o + 2 A + H2O = Fe(II)-heme a + 2 AH2. It participates in porphyrin-containing compound metabolism; heme A biosynthesis; heme A from heme O: step 1/1. Its function is as follows. Catalyzes the conversion of heme O to heme A by two successive hydroxylations of the methyl group at C8. The first hydroxylation forms heme I, the second hydroxylation results in an unstable dihydroxymethyl group, which spontaneously dehydrates, resulting in the formyl group of heme A. In Roseobacter denitrificans (strain ATCC 33942 / OCh 114) (Erythrobacter sp. (strain OCh 114)), this protein is Heme A synthase.